The chain runs to 249 residues: ATP synthase subunit a (249 aa).

5 consecutive transmembrane segments (helical) span residues 33-53 (GQVF…SLLA), 92-112 (VPFI…GALI), 131-151 (INTT…AGFS), 196-216 (LVVA…AMIL), and 217-237 (GLFT…SYIG).

Belongs to the ATPase A chain family. As to quaternary structure, F-type ATPases have 2 components, CF(1) - the catalytic core - and CF(0) - the membrane proton channel. CF(1) has five subunits: alpha(3), beta(3), gamma(1), delta(1), epsilon(1). CF(0) has four main subunits: a, b, b' and c.

It is found in the cellular thylakoid membrane. Functionally, key component of the proton channel; it plays a direct role in the translocation of protons across the membrane. In Synechococcus elongatus (strain ATCC 33912 / PCC 7942 / FACHB-805) (Anacystis nidulans R2), this protein is ATP synthase subunit a.